A 476-amino-acid polypeptide reads, in one-letter code: Bifunctional protein HldE (476 aa).

The interval 1 to 318 is ribokinase; it reads MKVTLPDFRR…ENAIRGRAET (318 aa). 195 to 198 is an ATP binding site; it reads NLSE. Asp-264 is a catalytic residue. Residues 344 to 476 are cytidylyltransferase; it reads MTNGIFDILH…IIQSIKNGRG (133 aa).

In the N-terminal section; belongs to the carbohydrate kinase PfkB family. This sequence in the C-terminal section; belongs to the cytidylyltransferase family. As to quaternary structure, homodimer.

It catalyses the reaction D-glycero-beta-D-manno-heptose 7-phosphate + ATP = D-glycero-beta-D-manno-heptose 1,7-bisphosphate + ADP + H(+). It carries out the reaction D-glycero-beta-D-manno-heptose 1-phosphate + ATP + H(+) = ADP-D-glycero-beta-D-manno-heptose + diphosphate. The protein operates within nucleotide-sugar biosynthesis; ADP-L-glycero-beta-D-manno-heptose biosynthesis; ADP-L-glycero-beta-D-manno-heptose from D-glycero-beta-D-manno-heptose 7-phosphate: step 1/4. Its pathway is nucleotide-sugar biosynthesis; ADP-L-glycero-beta-D-manno-heptose biosynthesis; ADP-L-glycero-beta-D-manno-heptose from D-glycero-beta-D-manno-heptose 7-phosphate: step 3/4. Functionally, catalyzes the phosphorylation of D-glycero-D-manno-heptose 7-phosphate at the C-1 position to selectively form D-glycero-beta-D-manno-heptose-1,7-bisphosphate. Catalyzes the ADP transfer from ATP to D-glycero-beta-D-manno-heptose 1-phosphate, yielding ADP-D-glycero-beta-D-manno-heptose. The polypeptide is Bifunctional protein HldE (Yersinia pestis bv. Antiqua (strain Antiqua)).